The chain runs to 281 residues: 2-dehydro-3-deoxyphosphooctonate aldolase (281 aa).

Belongs to the KdsA family.

Its subcellular location is the cytoplasm. The enzyme catalyses D-arabinose 5-phosphate + phosphoenolpyruvate + H2O = 3-deoxy-alpha-D-manno-2-octulosonate-8-phosphate + phosphate. It participates in carbohydrate biosynthesis; 3-deoxy-D-manno-octulosonate biosynthesis; 3-deoxy-D-manno-octulosonate from D-ribulose 5-phosphate: step 2/3. It functions in the pathway bacterial outer membrane biogenesis; lipopolysaccharide biosynthesis. This Pseudomonas paraeruginosa (strain DSM 24068 / PA7) (Pseudomonas aeruginosa (strain PA7)) protein is 2-dehydro-3-deoxyphosphooctonate aldolase.